The chain runs to 111 residues: Large ribosomal subunit protein uL24 (111 aa).

The protein belongs to the universal ribosomal protein uL24 family. Part of the 50S ribosomal subunit.

Its function is as follows. One of two assembly initiator proteins, it binds directly to the 5'-end of the 23S rRNA, where it nucleates assembly of the 50S subunit. Functionally, one of the proteins that surrounds the polypeptide exit tunnel on the outside of the subunit. This Bifidobacterium animalis subsp. lactis (strain AD011) protein is Large ribosomal subunit protein uL24.